The chain runs to 176 residues: Inner membrane-spanning protein YciB (176 aa).

6 helical membrane passes run 3–23 (FLFD…WGIF), 24–44 (TATA…AFRH), 49–69 (TMLW…LVLH), 81–101 (LYWL…NNLI), 121–141 (VAWA…VHNF), and 149–169 (FKLF…SLWL).

It belongs to the YciB family.

The protein localises to the cell inner membrane. Its function is as follows. Plays a role in cell envelope biogenesis, maintenance of cell envelope integrity and membrane homeostasis. This chain is Inner membrane-spanning protein YciB, found in Burkholderia vietnamiensis (strain G4 / LMG 22486) (Burkholderia cepacia (strain R1808)).